Reading from the N-terminus, the 479-residue chain is Anaerobic nitric oxide reductase flavorubredoxin (479 aa).

Residues 30–210 (LRGSSYNSYL…PFSRLVTPKI (181 aa)) are zinc metallo-hydrolase. 6 residues coordinate Fe cation: H79, E81, D83, H147, D166, and H227. In terms of domain architecture, Flavodoxin-like spans 254 to 393 (ITIFYDTMSN…LCREHGREIA (140 aa)). Residues 260–264 (TMSNN) and 342–369 (AFGSHGWSGGAVDRLSTRLQDAGFEMSL) contribute to the FMN site. The Rubredoxin-like domain occupies 423 to 474 (GPRMQCSVCQWIYDPAKGEPMQDVAPGTPWSEVPDNFLCPECSLGKDVFEEL). C428, C431, C461, and C464 together coordinate Fe cation.

In the N-terminal section; belongs to the zinc metallo-hydrolase group 3 family. As to quaternary structure, homotetramer. Fe cation is required as a cofactor. The cofactor is FMN.

Its subcellular location is the cytoplasm. It participates in nitrogen metabolism; nitric oxide reduction. In terms of biological role, anaerobic nitric oxide reductase; uses NADH to detoxify nitric oxide (NO), protecting several 4Fe-4S NO-sensitive enzymes. Has at least 2 reductase partners, only one of which (NorW, flavorubredoxin reductase) has been identified. NO probably binds to the di-iron center; electrons enter from the NorW at rubredoxin and are transferred sequentially to the FMN center and the di-iron center. Also able to function as an aerobic oxygen reductase. The protein is Anaerobic nitric oxide reductase flavorubredoxin of Shigella dysenteriae serotype 1 (strain Sd197).